Here is a 239-residue protein sequence, read N- to C-terminus: Methylthioribulose-1-phosphate dehydratase (239 aa).

Cysteine 94 contacts substrate. Zn(2+) is bound by residues histidine 112 and histidine 114. Catalysis depends on glutamate 136, which acts as the Proton donor/acceptor. A Zn(2+)-binding site is contributed by histidine 192.

This sequence belongs to the aldolase class II family. MtnB subfamily. Zn(2+) serves as cofactor.

The protein localises to the cytoplasm. The catalysed reaction is 5-(methylsulfanyl)-D-ribulose 1-phosphate = 5-methylsulfanyl-2,3-dioxopentyl phosphate + H2O. Its pathway is amino-acid biosynthesis; L-methionine biosynthesis via salvage pathway; L-methionine from S-methyl-5-thio-alpha-D-ribose 1-phosphate: step 2/6. Functionally, catalyzes the dehydration of methylthioribulose-1-phosphate (MTRu-1-P) into 2,3-diketo-5-methylthiopentyl-1-phosphate (DK-MTP-1-P). Functions in the methionine salvage pathway. May play a role in apoptosis. The protein is Methylthioribulose-1-phosphate dehydratase of Xenopus laevis (African clawed frog).